Reading from the N-terminus, the 35-residue chain is Hemocyanin A chain (35 aa).

This sequence belongs to the tyrosinase family. Hemocyanin subfamily. In terms of tissue distribution, hemolymph.

It is found in the secreted. It localises to the extracellular space. Its function is as follows. Hemocyanins are copper-containing oxygen carriers occurring freely dissolved in the hemolymph of many mollusks and arthropods. The chain is Hemocyanin A chain from Cherax destructor (Common yabby crayfish).